A 295-amino-acid polypeptide reads, in one-letter code: Protease HtpX (295 aa).

The next 2 membrane-spanning stretches (helical) occupy residues 4–24 and 41–61; these read ILLFVATNLAVVLVASITLSL and SSLLVFCAVFGFAGSLVSLFI. A Zn(2+)-binding site is contributed by histidine 147. The active site involves glutamate 148. Residue histidine 151 participates in Zn(2+) binding. The next 2 membrane-spanning stretches (helical) occupy residues 158-178 and 199-219; these read VTLALVQGVVNTFVMFFARII and VATIVAELILGILASMIVMWF. Residue glutamate 224 participates in Zn(2+) binding.

The protein belongs to the peptidase M48B family. Zn(2+) is required as a cofactor.

It is found in the cell inner membrane. This Pseudomonas putida (strain ATCC 700007 / DSM 6899 / JCM 31910 / BCRC 17059 / LMG 24140 / F1) protein is Protease HtpX.